The sequence spans 447 residues: Argininosuccinate synthase (447 aa).

Residues 17 to 25 (AFSGGLDTS) and alanine 43 contribute to the ATP site. Tyrosine 99 lines the L-citrulline pocket. Residues glycine 129 and threonine 131 each coordinate ATP. L-aspartate-binding residues include threonine 131, asparagine 135, and aspartate 136. Asparagine 135 contributes to the L-citrulline binding site. Residue aspartate 136 coordinates ATP. L-citrulline-binding residues include arginine 139 and serine 192. An ATP-binding site is contributed by aspartate 194. Residues threonine 201, glutamate 203, and glutamate 280 each coordinate L-citrulline.

This sequence belongs to the argininosuccinate synthase family. Type 2 subfamily. As to quaternary structure, homotetramer.

It is found in the cytoplasm. It catalyses the reaction L-citrulline + L-aspartate + ATP = 2-(N(omega)-L-arginino)succinate + AMP + diphosphate + H(+). It functions in the pathway amino-acid biosynthesis; L-arginine biosynthesis; L-arginine from L-ornithine and carbamoyl phosphate: step 2/3. This is Argininosuccinate synthase from Janthinobacterium sp. (strain Marseille) (Minibacterium massiliensis).